The primary structure comprises 749 residues: RNA-binding protein 5-B (749 aa).

Positions 1 to 88 (MGSDKRVSRS…YHSDGDYMDH (88 aa)) are disordered. The 81-residue stretch at 102–182 (KTIMLRGLPI…KTIAMHYSNP (81 aa)) folds into the RRM 1 domain. The RanBP2-type zinc-finger motif lies at 185–214 (KFEDWLCNKCGLYNFRRRLKCFRCGAAKAE). Residues 241-325 (SAIILRNIGP…KTIGVDFAKS (85 aa)) form the RRM 2 domain. Disordered stretches follow at residues 425 to 471 (QMYQ…SVPD), 520 to 558 (PAAD…AQQI), 570 to 595 (NKQK…ESAA), and 626 to 680 (TEEE…NSNI). Positions 429–460 (QPGSPTQSGTSTAASTTPASTTSTEEATTPTA) are enriched in low complexity. 2 stretches are compositionally biased toward basic and acidic residues: residues 585-594 (SRDEERKESA) and 627-648 (EEEK…EKYG). A G-patch domain is found at 677–723 (NSNIGNKMLQAMGWKEGSGLGRKSQGITAPIQAQVRMRGAGLGAKGS).

Belongs to the RBM5/RBM10 family. As to quaternary structure, component of the spliceosome A complex (also known as the prespliceosome). Appears to dissociate from the spliceosome upon formation of the spliceosome B complex (also known as the precatalytic spliceosome), in which the heterotrimeric U4/U6.U5 snRNPs are bound.

It is found in the nucleus. Its function is as follows. Component of the spliceosome A complex. Regulates alternative splicing of a number of mRNAs. May modulate splice site pairing after recruitment of the U1 and U2 snRNPs to the 5' and 3' splice sites of the intron. The protein is RNA-binding protein 5-B (rbm5-b) of Xenopus laevis (African clawed frog).